The primary structure comprises 603 residues: ATP-dependent lipid A-core flippase (603 aa).

A run of 4 helical transmembrane segments spans residues 20 to 40 (LGYV…FLIF), 79 to 99 (LVYA…LGSF), 170 to 190 (VFLF…MLAI), and 269 to 289 (PMLQ…VLWL). In terms of domain architecture, ABC transmembrane type-1 spans 31–324 (LLSIVGFLIF…LSEVSSTVQR (294 aa)). The ABC transporter domain maps to 356–592 (LEVRNLSFRY…NGHYARLHAM (237 aa)). An ATP-binding site is contributed by 390–397 (GRSGSGKS).

Belongs to the ABC transporter superfamily. Lipid exporter (TC 3.A.1.106) family. In terms of assembly, homodimer.

It localises to the cell inner membrane. The catalysed reaction is ATP + H2O + lipid A-core oligosaccharideSide 1 = ADP + phosphate + lipid A-core oligosaccharideSide 2.. Involved in lipopolysaccharide (LPS) biosynthesis. Translocates lipid A-core from the inner to the outer leaflet of the inner membrane. Transmembrane domains (TMD) form a pore in the inner membrane and the ATP-binding domain (NBD) is responsible for energy generation. This is ATP-dependent lipid A-core flippase from Pseudomonas aeruginosa (strain ATCC 15692 / DSM 22644 / CIP 104116 / JCM 14847 / LMG 12228 / 1C / PRS 101 / PAO1).